We begin with the raw amino-acid sequence, 303 residues long: Hemolysin C (303 aa).

CBS domains lie at 81 to 143 and 146 to 203; these read MVPR…NSPL and LIRK…IDDE.

Belongs to the UPF0053 family. Hemolysin C subfamily.

This is Hemolysin C (tlyC) from Rickettsia prowazekii (strain Madrid E).